A 360-amino-acid chain; its full sequence is Alpha-N-acetyl-neuraminyl-2,3-beta-galactosyl-1,3-N-acetyl-galactosaminide alpha-2,6-sialyltransferase (360 aa).

Residues 1–71 (MEHVVTCWRL…PGRLLLLTLC (71 aa)) lie on the Cytoplasmic side of the membrane. Residues 72–94 (ILTFSAVCVFLCCWACLPLCLAT) form a helical; Signal-anchor for type II membrane protein membrane-spanning segment. The Lumenal segment spans residues 95–360 (CLDRHLPAAP…VFAHPSWRAK (266 aa)). Cysteine 134 and cysteine 283 are oxidised to a cystine. N-linked (GlcNAc...) asparagine glycosylation is present at asparagine 193.

Belongs to the glycosyltransferase 29 family. In terms of tissue distribution, high expression in brain and colon and to a lesser extent in lung, heart, kidney, spleen and thymus.

It is found in the golgi apparatus membrane. The enzyme catalyses an alpha-Neu5Ac-(2-&gt;3)-beta-D-Gal-(1-&gt;3)-D-GlcNAc derivative + CMP-N-acetyl-beta-neuraminate = an alpha-Neu5Ac-(2-&gt;3)-beta-D-Gal-(1-&gt;3)-[alpha-Neu5Ac-(2-&gt;6)]-D-GlcNAc derivative + CMP + H(+). The catalysed reaction is N-acetyl-alpha-neuraminosyl-(2-&gt;3)-beta-D-galactosyl-(1-&gt;3)-N-acetyl-D-galactosamine + CMP-N-acetyl-beta-neuraminate = N-acetyl-alpha-neuraminosyl-(2-&gt;3)-beta-D-galactosyl-(1-&gt;3)-[N-acetyl-alpha-neuraminosyl-(2-&gt;6)]-N-acetyl-D-galactosamine + CMP + H(+). It catalyses the reaction a ganglioside GM1b (d18:1(4E)) + CMP-N-acetyl-beta-neuraminate = a ganglioside GD1alpha (d18:1(4E)) + CMP + H(+). It carries out the reaction 3-O-[alpha-Neu5Ac-(2-&gt;3)-beta-D-Gal-(1-&gt;3)-alpha-D-GalNAc]-L-Ser-[protein] + CMP-N-acetyl-beta-neuraminate = a 3-O-{alpha-Neu5Ac-(2-&gt;3)-beta-D-Gal-(1-&gt;3)-[alpha-Neu5Ac-(2-&gt;6)]-alpha-D-GalNAc}-L-seryl-[protein] + CMP + H(+). The enzyme catalyses 3-O-[alpha-Neu5Ac-(2-&gt;3)-beta-D-Gal-(1-&gt;3)-alpha-D-GalNAc]-L-Thr-[protein] + CMP-N-acetyl-beta-neuraminate = a 3-O-{alpha-Neu5Ac-(2-&gt;3)-beta-D-Gal-(1-&gt;3)-[alpha-Neu5Ac-(2-&gt;6)]-alpha-D-GalNAc}-L-threonyl-[protein] + CMP + H(+). The protein operates within protein modification; protein glycosylation. Its pathway is glycolipid biosynthesis. In terms of biological role, transfers the sialyl group (N-acetyl-alpha-neuraminyl or NeuAc) from CMP-NeuAc to the GalNAc residue on the NeuAc-alpha-2,3-Gal-beta-1,3-GalNAc sequence of glycoproteins and glycolipids forming an alpha-2,6-linkage. Produces branched type disialyl structures by transfer of a sialyl group onto a GalNAc residue inside the backbone core chains. Prefers O-glycans to glycoproteins or glycolipids. The polypeptide is Alpha-N-acetyl-neuraminyl-2,3-beta-galactosyl-1,3-N-acetyl-galactosaminide alpha-2,6-sialyltransferase (St6galnac4) (Mus musculus (Mouse)).